The sequence spans 39 residues: Larval cuticle protein SC6 (39 aa).

The Chitin-binding type R&amp;R domain maps to 15-39 (VDQFKYGLELDNSIKADQEGHLEGD).

In terms of biological role, component of the cuticle of the larva of flesh fly. The chain is Larval cuticle protein SC6 from Sarcophaga bullata (Grey flesh fly).